Consider the following 871-residue polypeptide: Metabotropic glutamate receptor 6 (871 aa).

Residues 1–23 (MGRLRVLLLWLAWWLSQAGIAHG) form the signal peptide. The Extracellular portion of the chain corresponds to 24–579 (AGSVRLAGGL…VVRLTWSSPW (556 aa)). A disulfide bridge connects residues cysteine 51 and cysteine 93. Residues serine 148, 169 to 171 (AST), and tyrosine 219 contribute to the L-glutamate site. 7 disulfides stabilise this stretch: cysteine 238/cysteine 530, cysteine 361/cysteine 377, cysteine 417/cysteine 424, cysteine 512/cysteine 531, cysteine 516/cysteine 534, cysteine 537/cysteine 549, and cysteine 552/cysteine 565. Asparagine 290 carries N-linked (GlcNAc...) asparagine glycosylation. Aspartate 301 is a binding site for L-glutamate. An L-glutamate-binding site is contributed by lysine 394. Asparagine 445 and asparagine 473 each carry an N-linked (GlcNAc...) asparagine glycan. The N-linked (GlcNAc...) asparagine glycan is linked to asparagine 561. The helical transmembrane segment at 580–602 (AALPLLLAVLGIMATTTIIATFM) threads the bilayer. Over 603–616 (RHNDTPIVRASGRE) the chain is Cytoplasmic. Residues 617–637 (LSYVLLTGIFLIYAITFLMVA) traverse the membrane as a helical segment. At 638–648 (EPCAAVCASRR) the chain is on the extracellular side. A helical membrane pass occupies residues 649-667 (LLLGLGTTLSYSALLTKTN). Over 668 to 691 (RIYRIFEQGKRSVTPPPFISPTSQ) the chain is Cytoplasmic. Residues 692 to 712 (LVITFGLTSLQVVGVIAWLGA) form a helical membrane-spanning segment. The Extracellular segment spans residues 713-742 (QPPHSVIDYEEQRTVDPEQARGVLKCDMSD). Residues 743–764 (LSLIGCLGYSLLLMVTCTVYAI) traverse the membrane as a helical segment. Residues 765–777 (KARGVPETFNEAK) are Cytoplasmic-facing. Residues 778 to 800 (PIGFTMYTTCIIWLAFVPIFFGT) traverse the membrane as a helical segment. Over 801–813 (AQSAEKIYIQTTT) the chain is Extracellular. A helical membrane pass occupies residues 814-839 (LTVSLSLSASVSLGMLYVPKTYVILF). Residues 840–871 (HPEQNVQKRKRSLKKTSTMAAPPKSENSEDAK) are Cytoplasmic-facing. A disordered region spans residues 848–871 (RKRSLKKTSTMAAPPKSENSEDAK).

The protein belongs to the G-protein coupled receptor 3 family. In terms of assembly, homodimer. Interacts with GPR179. Interacts with photoreceptor synaptic protein LRIT1 (via its N-terminal extracellular domain). In terms of tissue distribution, detected in the outer plexiform layer in retina (at protein level).

It localises to the cell membrane. The protein resides in the endoplasmic reticulum membrane. It is found in the golgi apparatus membrane. Its subcellular location is the cell projection. The protein localises to the dendrite. In terms of biological role, G-protein coupled receptor for glutamate. Ligand binding causes a conformation change that triggers signaling via guanine nucleotide-binding proteins (G proteins) and modulates the activity of down-stream effectors, such as adenylate cyclase. Signaling inhibits adenylate cyclase activity. Signaling stimulates TRPM1 channel activity and Ca(2+) uptake. Required for normal vision. This is Metabotropic glutamate receptor 6 (Grm6) from Mus musculus (Mouse).